The primary structure comprises 400 residues: WD repeat and FYVE domain-containing protein 2 (400 aa).

WD repeat units follow at residues 22–61, 66–105, 112–150, 153–192, 197–236, and 240–279; these read GSQEVVNMAVIVPKEEGVISVSEDRTVRVWLKRDSGQYWP, AMPSPCSCMSFNPETRRLSIGLDNGTISEFILSEDYNKMT, AHQSRVTMILFVLELEWVLSTGQDKQFAWHCSESGQRLG, RTSAVASGLQFDVETRHVFIGDHSGQVTILKLEQENCTLV, GHTGGVTALCWDPVQRVLFSGSSDHSVIMWDIGGRKGTAI, and GHNDRVQALSYAQHTRQLISCGGDGGIVVWNMDVERQETP. The FYVE-type zinc finger occupies 281–352; that stretch reads WLDSDSCQKC…VCDSCHEAIT (72 aa). Zn(2+) is bound by residues cysteine 287, cysteine 290, cysteine 314, cysteine 317, cysteine 322, cysteine 325, cysteine 344, and cysteine 347. The stretch at 364 to 399 is one WD 7 repeat; that stretch reads DSKHNIVHVHFDATRGWLLTSGTDKVIKLWDMTPVV.

In terms of assembly, homodimer. Interacts (via WD repeats 1-3) with AKT1, AKT2, PRKCZ and PRKCI. Interacts with VAMP2. Forms a complex with VAMP2 and PRKCZ. Interacts with FOXO1. Forms a complex with AKT1 and FOXO1.

Its subcellular location is the endosome. The protein resides in the early endosome. It is found in the cytoplasm. In terms of biological role, acts in an adapter protein-like fashion to mediate the interaction between the kinase PRKCZ and its substrate VAMP2 and increases the PRKCZ-dependent phosphorylation of VAMP2. Positively regulates adipocyte differentiation, by facilitating the phosphorylation and thus inactivation of the anti-adipogenetic transcription factor FOXO1 by the kinase AKT1. Plays a role in endosomal control of AKT2 signaling; required for insulin-stimulated AKT2 phosphorylation and glucose uptake and insulin-stimulated phosphorylation of AKT2 substrates. Participates in transferrin receptor endocytosis. The chain is WD repeat and FYVE domain-containing protein 2 (WDFY2) from Homo sapiens (Human).